Here is a 363-residue protein sequence, read N- to C-terminus: Type 3 secretion system translocon protein SctB (363 aa).

Positions 1–16 (MEIQNTKPTQTLYTDI) are enriched in polar residues. A disordered region spans residues 1–30 (MEIQNTKPTQTLYTDISTKQTQSSSETQKS). Low complexity predominate over residues 17-30 (STKQTQSSSETQKS). Positions 33–73 (YQQIAAHIPLNVGKNPVLTTTLNDDQLLKLSEQVQHDSEII) are ipgC chaperone binding domain. A helical transmembrane segment spans residues 99 to 120 (ISSLSSNAVSLIISVAVLLSAL).

Belongs to the SctB/SipC family. In terms of assembly, the core secretion machinery of the T3SS is composed of approximately 20 different proteins, including cytoplasmic components, a base, an export apparatus and a needle. This subunit is involved in the formation of a pore, called the translocon, in host membrane. Interacts with IpaB/SctE. Interacts with the molecular chaperone IpgC, which prevents premature association with IpaB/SctE within the cytoplasm of Shigella cells. Does not interact with CDC42 or RAC1 GTPases in vitro.

It localises to the secreted. It is found in the host membrane. With respect to regulation, interaction with the membrane is affected by the pH. In terms of biological role, component of the type III secretion system (T3SS), also called injectisome, which is used to inject bacterial effector proteins into eukaryotic host cells. IpaB/SctE and IpaC/SctB are inserted into the host membrane where they form a pore and allow the translocation of effector proteins into the cytosol of target cells. Induction and secretion of IpaC/SctB comprise the final step in triggering the induction of full type III secretion. Required for efficient dissemination. Necessary for lysis of the two cellular membranes that surround bacteria in protrusions during cell-to-cell spread. Contribute to actin nucleation in vitro, which may be a necessary step in Shigella invasion. The sequence is that of Type 3 secretion system translocon protein SctB from Shigella flexneri.